A 304-amino-acid chain; its full sequence is N-acetyl-D-glucosamine kinase (304 aa).

ATP contacts are provided by residues 4–11 (GFDIGGTK) and 133–140 (GFGGGLIF). 4 residues coordinate Zn(2+): His157, Cys178, Cys180, and Cys185.

This sequence belongs to the ROK (NagC/XylR) family. NagK subfamily.

It carries out the reaction N-acetyl-D-glucosamine + ATP = N-acetyl-D-glucosamine 6-phosphate + ADP + H(+). The protein operates within cell wall biogenesis; peptidoglycan recycling. Catalyzes the phosphorylation of N-acetyl-D-glucosamine (GlcNAc) derived from cell-wall degradation, yielding GlcNAc-6-P. The sequence is that of N-acetyl-D-glucosamine kinase from Pasteurella multocida (strain Pm70).